The following is a 286-amino-acid chain: 4-diphosphocytidyl-2-C-methyl-D-erythritol kinase (286 aa).

Lys-11 is a catalytic residue. Residue 93 to 103 (PFGAGLGGGSS) coordinates ATP. Asp-135 is a catalytic residue.

Belongs to the GHMP kinase family. IspE subfamily.

The catalysed reaction is 4-CDP-2-C-methyl-D-erythritol + ATP = 4-CDP-2-C-methyl-D-erythritol 2-phosphate + ADP + H(+). The protein operates within isoprenoid biosynthesis; isopentenyl diphosphate biosynthesis via DXP pathway; isopentenyl diphosphate from 1-deoxy-D-xylulose 5-phosphate: step 3/6. Catalyzes the phosphorylation of the position 2 hydroxy group of 4-diphosphocytidyl-2C-methyl-D-erythritol. This is 4-diphosphocytidyl-2-C-methyl-D-erythritol kinase from Chlorobium phaeobacteroides (strain BS1).